The sequence spans 169 residues: Hydroperoxy fatty acid reductase gpx1 (169 aa).

The active site involves Cys41.

It belongs to the glutathione peroxidase family. In terms of assembly, monomer.

The catalysed reaction is a hydroperoxy polyunsaturated fatty acid + NADPH + H(+) = a hydroxy polyunsaturated fatty acid + NADP(+) + H2O. Its activity is regulated as follows. Mercaptosuccinate, pCMB, and nethylmaleimide act as inhibitors of the catalytic activity. In terms of biological role, hydroperoxy fatty acid reductase essential for the removal of lipid hydroperoxides under normal and stress conditions, leading to the protection of membrane integrity. This Synechocystis sp. (strain ATCC 27184 / PCC 6803 / Kazusa) protein is Hydroperoxy fatty acid reductase gpx1 (gpx1).